The following is a 66-amino-acid chain: Nigrocin-2GRa (66 aa).

Positions 1–22 (MFTLKKSQLLLFFPGTINLSLC) are cleaved as a signal peptide. A propeptide spanning residues 23–45 (QDETNAEEERRDEEVAKMEEIKR) is cleaved from the precursor. Cys-60 and Cys-66 are joined by a disulfide.

Expressed by the skin glands.

Its subcellular location is the secreted. In terms of biological role, antimicrobial peptide active at least against the Gram-positive bacterium S.aureus but with otherwise unclear activity spectrum. Lacks hemolytic activity against rabbit or human erythrocytes. This is Nigrocin-2GRa from Odorrana grahami (Yunnanfu frog).